The chain runs to 336 residues: uncharacterized protein (336 aa).

Positions 1-21 (MSELVLITGITGFVASHSAEA) are cleaved as a signal peptide. An NADP(+)-binding site is contributed by Lys38. Position 153 is a phosphothreonine (Thr153). An NADP(+)-binding site is contributed by Tyr167.

This sequence belongs to the NAD(P)-dependent epimerase/dehydratase family. Dihydroflavonol-4-reductase subfamily.

This is an uncharacterized protein from Schizosaccharomyces pombe (strain 972 / ATCC 24843) (Fission yeast).